The sequence spans 299 residues: Pyridoxal 5'-phosphate synthase subunit PdxS (299 aa).

Aspartate 24 serves as a coordination point for D-ribose 5-phosphate. Lysine 81 serves as the catalytic Schiff-base intermediate with D-ribose 5-phosphate. Glycine 153 is a binding site for D-ribose 5-phosphate. D-glyceraldehyde 3-phosphate is bound at residue arginine 165. D-ribose 5-phosphate-binding positions include glycine 219 and 240-241; that span reads GS.

The protein belongs to the PdxS/SNZ family. In the presence of PdxT, forms a dodecamer of heterodimers.

It carries out the reaction aldehydo-D-ribose 5-phosphate + D-glyceraldehyde 3-phosphate + L-glutamine = pyridoxal 5'-phosphate + L-glutamate + phosphate + 3 H2O + H(+). The protein operates within cofactor biosynthesis; pyridoxal 5'-phosphate biosynthesis. Functionally, catalyzes the formation of pyridoxal 5'-phosphate from ribose 5-phosphate (RBP), glyceraldehyde 3-phosphate (G3P) and ammonia. The ammonia is provided by the PdxT subunit. Can also use ribulose 5-phosphate and dihydroxyacetone phosphate as substrates, resulting from enzyme-catalyzed isomerization of RBP and G3P, respectively. The sequence is that of Pyridoxal 5'-phosphate synthase subunit PdxS from Methanococcus maripaludis (strain DSM 14266 / JCM 13030 / NBRC 101832 / S2 / LL).